We begin with the raw amino-acid sequence, 400 residues long: Enoyl-[acyl-carrier-protein] reductase [NADH] 2 (400 aa).

NAD(+) is bound by residues 48-53, 75-76, 112-113, and 141-142; these read GASSGF, FE, DA, and LA. Tyr227 lines the substrate pocket. Tyr237 serves as the catalytic Proton donor. NAD(+)-binding positions include Lys246 and 275-277; that span reads LVT.

This sequence belongs to the TER reductase family. Monomer.

It catalyses the reaction a 2,3-saturated acyl-[ACP] + NAD(+) = a (2E)-enoyl-[ACP] + NADH + H(+). The protein operates within lipid metabolism; fatty acid biosynthesis. Functionally, involved in the final reduction of the elongation cycle of fatty acid synthesis (FAS II). Catalyzes the reduction of a carbon-carbon double bond in an enoyl moiety that is covalently linked to an acyl carrier protein (ACP). This is Enoyl-[acyl-carrier-protein] reductase [NADH] 2 from Photobacterium profundum (strain SS9).